The following is a 334-amino-acid chain: ADP-L-glycero-D-manno-heptose-6-epimerase (334 aa).

NADP(+)-binding positions include 11-12 (FI), 32-33 (DN), Lys39, Lys54, 77-81 (QGACS), and Asn94. Tyr141 serves as the catalytic Proton acceptor. Lys145 serves as a coordination point for NADP(+). Residue Asn171 participates in substrate binding. Positions 172 and 180 each coordinate NADP(+). The active-site Proton acceptor is the Lys180. Residues Arg182, His189, 203–206 (FGSN), Arg216, and Tyr295 each bind substrate.

This sequence belongs to the NAD(P)-dependent epimerase/dehydratase family. HldD subfamily. In terms of assembly, homopentamer. NADP(+) serves as cofactor.

The enzyme catalyses ADP-D-glycero-beta-D-manno-heptose = ADP-L-glycero-beta-D-manno-heptose. The protein operates within nucleotide-sugar biosynthesis; ADP-L-glycero-beta-D-manno-heptose biosynthesis; ADP-L-glycero-beta-D-manno-heptose from D-glycero-beta-D-manno-heptose 7-phosphate: step 4/4. It participates in bacterial outer membrane biogenesis; LOS core biosynthesis. In terms of biological role, catalyzes the interconversion between ADP-D-glycero-beta-D-manno-heptose and ADP-L-glycero-beta-D-manno-heptose via an epimerization at carbon 6 of the heptose. The protein is ADP-L-glycero-D-manno-heptose-6-epimerase of Neisseria meningitidis serogroup A / serotype 4A (strain DSM 15465 / Z2491).